The following is a 660-amino-acid chain: Probable alpha-galactosidase D (660 aa).

Positions methionine 1–leucine 20 are cleaved as a signal peptide. Asparagine 47, asparagine 91, and asparagine 129 each carry an N-linked (GlcNAc...) asparagine glycan. Cysteine 124 and cysteine 157 are joined by a disulfide. Aspartate 155 acts as the Nucleophile in catalysis. Asparagine 182 and asparagine 191 each carry an N-linked (GlcNAc...) asparagine glycan. Glutamate 200–serine 204 lines the substrate pocket. The active-site Proton donor is aspartate 222. N-linked (GlcNAc...) asparagine glycosylation is found at asparagine 351, asparagine 403, asparagine 460, asparagine 492, asparagine 506, asparagine 514, and asparagine 584.

Belongs to the glycosyl hydrolase 27 family.

It localises to the secreted. The catalysed reaction is Hydrolysis of terminal, non-reducing alpha-D-galactose residues in alpha-D-galactosides, including galactose oligosaccharides, galactomannans and galactolipids.. Functionally, hydrolyzes a variety of simple alpha-D-galactoside as well as more complex molecules such as oligosaccharides and polysaccharides. This is Probable alpha-galactosidase D (aglD) from Aspergillus niger (strain ATCC MYA-4892 / CBS 513.88 / FGSC A1513).